The chain runs to 342 residues: Glycerol-3-phosphate dehydrogenase [NAD(P)+] (342 aa).

Residues Ser13, Trp14, and Lys108 each contribute to the NADPH site. Sn-glycerol 3-phosphate contacts are provided by Lys108, Gly139, and Ser141. Residue Ala143 participates in NADPH binding. Sn-glycerol 3-phosphate contacts are provided by Lys194, Asp247, Ser257, Arg258, and Asn259. Catalysis depends on Lys194, which acts as the Proton acceptor. Arg258 serves as a coordination point for NADPH. Positions 282 and 284 each coordinate NADPH.

Belongs to the NAD-dependent glycerol-3-phosphate dehydrogenase family.

The protein resides in the cytoplasm. It carries out the reaction sn-glycerol 3-phosphate + NAD(+) = dihydroxyacetone phosphate + NADH + H(+). The catalysed reaction is sn-glycerol 3-phosphate + NADP(+) = dihydroxyacetone phosphate + NADPH + H(+). It participates in membrane lipid metabolism; glycerophospholipid metabolism. In terms of biological role, catalyzes the reduction of the glycolytic intermediate dihydroxyacetone phosphate (DHAP) to sn-glycerol 3-phosphate (G3P), the key precursor for phospholipid synthesis. This chain is Glycerol-3-phosphate dehydrogenase [NAD(P)+], found in Lactococcus lactis subsp. cremoris (strain SK11).